Reading from the N-terminus, the 279-residue chain is 2-dehydro-3-deoxyphosphooctonate aldolase (279 aa).

Belongs to the KdsA family.

Its subcellular location is the cytoplasm. The catalysed reaction is D-arabinose 5-phosphate + phosphoenolpyruvate + H2O = 3-deoxy-alpha-D-manno-2-octulosonate-8-phosphate + phosphate. The protein operates within carbohydrate biosynthesis; 3-deoxy-D-manno-octulosonate biosynthesis; 3-deoxy-D-manno-octulosonate from D-ribulose 5-phosphate: step 2/3. It functions in the pathway bacterial outer membrane biogenesis; lipopolysaccharide biosynthesis. The chain is 2-dehydro-3-deoxyphosphooctonate aldolase from Azoarcus sp. (strain BH72).